Reading from the N-terminus, the 275-residue chain is Collectin-10 (275 aa).

Positions 1 to 25 (MKYGKLWPIGVSVLGVIALHVRVLS) are cleaved as a signal peptide. A glycan (N-linked (GlcNAc...) asparagine) is linked at N30. The tract at residues 39 to 76 (THTILPGPKGDDGEAGDTGVLGKLGKDGPKGQKGNKGI) is disordered. Residues 51–110 (GEAGDTGVLGKLGKDGPKGQKGNKGIIGDSGDLGLIGKIGPIGSKGDKGHKGLPGLPGGK) enclose the Collagen-like domain. The C-type lectin domain maps to 153–269 (TDEKYYYIVR…CSLTIYFVCE (117 aa)). Disulfide bonds link C174–C268 and C246–C260.

It belongs to the COLEC10/COLEC11 family.

The protein localises to the secreted. Its function is as follows. Lectin that binds to various sugars: galactose &gt; mannose = fucose &gt; N-acetylglucosamine &gt; N-acetylgalactosamine. The protein is Collectin-10 (colec10) of Xenopus tropicalis (Western clawed frog).